The chain runs to 173 residues: Pyridoxal 5'-phosphate synthase subunit PdxT (173 aa).

Gly-49 to Ser-51 serves as a coordination point for L-glutamine. The Nucleophile role is filled by Cys-81. Residues Arg-113 and Ile-141 to Arg-142 contribute to the L-glutamine site.

Belongs to the glutaminase PdxT/SNO family. As to quaternary structure, in the presence of PdxS, forms a dodecamer of heterodimers. Only shows activity in the heterodimer.

It carries out the reaction aldehydo-D-ribose 5-phosphate + D-glyceraldehyde 3-phosphate + L-glutamine = pyridoxal 5'-phosphate + L-glutamate + phosphate + 3 H2O + H(+). The enzyme catalyses L-glutamine + H2O = L-glutamate + NH4(+). Its pathway is cofactor biosynthesis; pyridoxal 5'-phosphate biosynthesis. Its function is as follows. Catalyzes the hydrolysis of glutamine to glutamate and ammonia as part of the biosynthesis of pyridoxal 5'-phosphate. The resulting ammonia molecule is channeled to the active site of PdxS. In Mycolicibacterium paratuberculosis (strain ATCC BAA-968 / K-10) (Mycobacterium paratuberculosis), this protein is Pyridoxal 5'-phosphate synthase subunit PdxT.